Here is a 411-residue protein sequence, read N- to C-terminus: MERIPSAQPPPTCLPKTPGLEHGDLSGMDFAHMYQVYKSRRGIKRSEDSKETYKLPHRLIEKKRRDRINECIAQLKDLLPEHLKLTTLGHLEKAVVLELTLKHVKALTNLIDQQQQKIMALQSGLQAGDLSGKNIEAGQEMFCSGFQTCAREVLQYLAKHENTRDLKSSQLVTHLHRVVSELLQGSASRKPLDSAPKPVDFKEKPSFLAKGSEGPGKNCVPVIQRTFAPSGGEQSGSDTDTDSGYGGELEKGDLRSEQPYFKSDHGRRFTVGERVSTIKQESEEPPTKKSRMQLSDEEGHFVGSDLMGSPFLGPHPHQPPFCLPFYLIPPSATAYLPMLEKCWYPTSVPLLYPGLNTSAAALSSFMNPDKIPTPLLLPQRLPSPLAHSSLDSSALLQALKQIPPLNLETKD.

The interval 1-21 is disordered; it reads MERIPSAQPPPTCLPKTPGLE. Residues 1–139 are essential for interaction with BMAL1, E-box binding and repressor activity against the CLOCK-BMAL1 heterodimer; the sequence is MERIPSAQPP…LSGKNIEAGQ (139 aa). The bHLH domain maps to 52–107; sequence TYKLPHRLIEKKRRDRINECIAQLKDLLPEHLKLTTLGHLEKAVVLELTLKHVKAL. A necessary for interaction with RXRA and repressor activity against RXRA region spans residues 75–79; sequence LKDLL. Residues 142-175 enclose the Orange domain; that stretch reads FCSGFQTCAREVLQYLAKHENTRDLKSSQLVTHL. A Glycyl lysine isopeptide (Lys-Gly) (interchain with G-Cter in SUMO1, SUMO2 and SUMO3) cross-link involves residue K159. A Glycyl lysine isopeptide (Lys-Gly) (interchain with G-Cter in SUMO2) cross-link involves residue K167. The segment at 186–293 is disordered; the sequence is SASRKPLDSA…EPPTKKSRMQ (108 aa). S235 is subject to Phosphoserine. Over residues 248–271 the composition is skewed to basic and acidic residues; it reads ELEKGDLRSEQPYFKSDHGRRFTV. K279 is covalently cross-linked (Glycyl lysine isopeptide (Lys-Gly) (interchain with G-Cter in SUMO1); alternate). A Glycyl lysine isopeptide (Lys-Gly) (interchain with G-Cter in SUMO1, SUMO2 and SUMO3); alternate cross-link involves residue K279. K279 is covalently cross-linked (Glycyl lysine isopeptide (Lys-Gly) (interchain with G-Cter in SUMO2); alternate). K288 participates in a covalent cross-link: Glycyl lysine isopeptide (Lys-Gly) (interchain with G-Cter in SUMO2). S383 is subject to Phosphoserine.

Homodimer. Heterodimer with BHLHE41/DEC2. Interacts with TCF3/E47. Interacts with ubiquitin-conjugating enzyme UBE2I/UBC9. Interacts with HDAC1, SUMO1, RXRA and BMAL1. Ubiquitinated; which may lead to proteasomal degradation. Post-translationally, sumoylation inhibits its ubiquitination and promotes its negative regulation of the CLOCK-BMAL1 heterodimer transcriptional activator activity. In terms of tissue distribution, expressed in heart, spleen, lung, liver, muscle, kidney, uterus and gut. Highly expressed in the cerebral cortex, especially in the fifth layer, thalamus, superior colliculus, olfactory bulb, piriform cortex, hippocampus and hypothalamic nuclei.

It is found in the cytoplasm. The protein resides in the nucleus. Its function is as follows. Transcriptional repressor involved in the regulation of the circadian rhythm by negatively regulating the activity of the clock genes and clock-controlled genes. Acts as the negative limb of a novel autoregulatory feedback loop (DEC loop) which differs from the one formed by the PER and CRY transcriptional repressors (PER/CRY loop). Both these loops are interlocked as it represses the expression of PER1/2 and in turn is repressed by PER1/2 and CRY1/2. Represses the activity of the circadian transcriptional activator: CLOCK-BMAL1|BMAL2 heterodimer by competing for the binding to E-box elements (5'-CACGTG-3') found within the promoters of its target genes. Negatively regulates its own expression and the expression of DBP and BHLHE41/DEC2. Acts as a corepressor of RXR and the RXR-LXR heterodimers and represses the ligand-induced RXRA and NR1H3/LXRA transactivation activity. May be involved in the regulation of chondrocyte differentiation via the cAMP pathway. Represses the transcription of NR0B2 and attentuates the transactivation of NR0B2 by the CLOCK-BMAL1 complex. Drives the circadian rhythm of blood pressure through transcriptional repression of ATP1B1 in the cardiovascular system. The sequence is that of Class E basic helix-loop-helix protein 40 (Bhlhe40) from Rattus norvegicus (Rat).